Reading from the N-terminus, the 428-residue chain is Glutamate-1-semialdehyde 2,1-aminomutase 1 (428 aa).

Lys-267 is subject to N6-(pyridoxal phosphate)lysine.

It belongs to the class-III pyridoxal-phosphate-dependent aminotransferase family. HemL subfamily. Homodimer. It depends on pyridoxal 5'-phosphate as a cofactor.

It is found in the cytoplasm. It carries out the reaction (S)-4-amino-5-oxopentanoate = 5-aminolevulinate. It functions in the pathway porphyrin-containing compound metabolism; protoporphyrin-IX biosynthesis; 5-aminolevulinate from L-glutamyl-tRNA(Glu): step 2/2. The protein is Glutamate-1-semialdehyde 2,1-aminomutase 1 (hemL1) of Staphylococcus aureus (strain NCTC 8325 / PS 47).